The chain runs to 450 residues: Membrane-bound lytic murein transglycosylase F 2 (450 aa).

The signal sequence occupies residues M1–T20. The segment at D21–V261 is non-LT domain. The interval G262–E450 is LT domain. The active site involves E308.

This sequence in the N-terminal section; belongs to the bacterial solute-binding protein 3 family. In the C-terminal section; belongs to the transglycosylase Slt family.

The protein resides in the cell outer membrane. The enzyme catalyses Exolytic cleavage of the (1-&gt;4)-beta-glycosidic linkage between N-acetylmuramic acid (MurNAc) and N-acetylglucosamine (GlcNAc) residues in peptidoglycan, from either the reducing or the non-reducing ends of the peptidoglycan chains, with concomitant formation of a 1,6-anhydrobond in the MurNAc residue.. Functionally, murein-degrading enzyme that degrades murein glycan strands and insoluble, high-molecular weight murein sacculi, with the concomitant formation of a 1,6-anhydromuramoyl product. Lytic transglycosylases (LTs) play an integral role in the metabolism of the peptidoglycan (PG) sacculus. Their lytic action creates space within the PG sacculus to allow for its expansion as well as for the insertion of various structures such as secretion systems and flagella. The sequence is that of Membrane-bound lytic murein transglycosylase F 2 from Alkalilimnicola ehrlichii (strain ATCC BAA-1101 / DSM 17681 / MLHE-1).